The primary structure comprises 583 residues: Aspartate--tRNA ligase (583 aa).

Glu174 contacts L-aspartate. An aspartate region spans residues 198–201; it reads QTFK. Arg220 contributes to the L-aspartate binding site. ATP contacts are provided by residues 220–222 and Gln229; that span reads RDE. Residue His445 participates in L-aspartate binding. Glu479 serves as a coordination point for ATP. Residue Arg486 coordinates L-aspartate. 531–534 contacts ATP; that stretch reads GLDR.

This sequence belongs to the class-II aminoacyl-tRNA synthetase family. Type 1 subfamily. In terms of assembly, homodimer.

The protein localises to the cytoplasm. It carries out the reaction tRNA(Asp) + L-aspartate + ATP = L-aspartyl-tRNA(Asp) + AMP + diphosphate. In terms of biological role, catalyzes the attachment of L-aspartate to tRNA(Asp) in a two-step reaction: L-aspartate is first activated by ATP to form Asp-AMP and then transferred to the acceptor end of tRNA(Asp). The polypeptide is Aspartate--tRNA ligase (Flavobacterium psychrophilum (strain ATCC 49511 / DSM 21280 / CIP 103535 / JIP02/86)).